We begin with the raw amino-acid sequence, 457 residues long: CUB1 family protein C30C2.08 (457 aa).

Coiled coils occupy residues 119 to 174 and 418 to 448; these read TQND…NISK and QELV…EERE.

The protein belongs to the CUB1 family.

The protein localises to the cytoplasm. It localises to the nucleus. In terms of biological role, involved in bleomycin tolerance with links to DNA repair and/or proteasome function. This chain is CUB1 family protein C30C2.08, found in Schizosaccharomyces pombe (strain 972 / ATCC 24843) (Fission yeast).